The chain runs to 552 residues: HTH-type transcriptional regulator SgrR (552 aa).

Residues 1-116 form the HTH marR-type domain; it reads MPSGRLQQQF…LISHLGRSFR (116 aa). Residues 26–49 constitute a DNA-binding region (H-T-H motif); the sequence is LNELADLLNCSRRHMRTLLNTMQA. The segment at 163–493 is solute-binding; it reads ELEADIAHHW…RDWQGDAAQW (331 aa).

Functionally, activates the small RNA gene sgrS under glucose-phosphate stress conditions as well as yfdZ. Represses its own transcription under both stress and non-stress conditions. Might act as a sensor of the intracellular accumulation of phosphoglucose by binding these molecules in its C-terminal solute-binding domain. The sequence is that of HTH-type transcriptional regulator SgrR from Salmonella typhimurium (strain LT2 / SGSC1412 / ATCC 700720).